Here is a 397-residue protein sequence, read N- to C-terminus: 3-ketoacyl-CoA thiolase, mitochondrial (397 aa).

The transit peptide at 1–16 directs the protein to the mitochondrion; not cleaved; the sequence is MALLRGVFVVAAKRTP. At K25 the chain carries N6-acetyllysine; alternate. K25 carries the post-translational modification N6-succinyllysine; alternate. K45 is subject to N6-succinyllysine. C92 serves as the catalytic Acyl-thioester intermediate. T119 carries the phosphothreonine modification. A Phosphoserine modification is found at S121. The residue at position 127 (Y127) is a Phosphotyrosine. T136 carries the post-translational modification Phosphothreonine. Residue K137 is modified to N6-acetyllysine; alternate. K137 carries the post-translational modification N6-succinyllysine; alternate. S140 is modified (phosphoserine). N6-acetyllysine; alternate occurs at positions 143, 171, 191, and 209. N6-succinyllysine; alternate is present on residues K143, K171, K191, and K209. N6-succinyllysine is present on residues K211, K212, and K214. R224 and T227 together coordinate CoA. K234 is subject to N6-acetyllysine; alternate. Position 234 is an N6-succinyllysine; alternate (K234). At K240 the chain carries N6-succinyllysine. K241 is subject to N6-acetyllysine. S251 provides a ligand contact to CoA. Residues K269 and K270 each carry the N6-acetyllysine modification. K305 is subject to N6-acetyllysine; alternate. K305 carries the N6-succinyllysine; alternate modification. A Phosphoserine modification is found at S310. N6-acetyllysine; alternate is present on K312. At K312 the chain carries N6-succinyllysine; alternate. S333 bears the Phosphoserine mark. K340 and K375 each carry N6-acetyllysine. C382 serves as the catalytic Proton donor/acceptor.

Belongs to the thiolase-like superfamily. Thiolase family. Homotetramer. Interacts with BNIP3.

The protein resides in the mitochondrion. The enzyme catalyses an acyl-CoA + acetyl-CoA = a 3-oxoacyl-CoA + CoA. The catalysed reaction is 2 acetyl-CoA = acetoacetyl-CoA + CoA. It carries out the reaction acetyl-CoA + H2O = acetate + CoA + H(+). It catalyses the reaction propanoyl-CoA + H2O = propanoate + CoA + H(+). The enzyme catalyses butanoyl-CoA + H2O = butanoate + CoA + H(+). The catalysed reaction is hexanoyl-CoA + H2O = hexanoate + CoA + H(+). It carries out the reaction octanoyl-CoA + H2O = octanoate + CoA + H(+). It catalyses the reaction decanoyl-CoA + H2O = decanoate + CoA + H(+). The enzyme catalyses dodecanoyl-CoA + H2O = dodecanoate + CoA + H(+). The catalysed reaction is tetradecanoyl-CoA + H2O = tetradecanoate + CoA + H(+). It carries out the reaction hexadecanoyl-CoA + H2O = hexadecanoate + CoA + H(+). It participates in lipid metabolism; fatty acid beta-oxidation. Its function is as follows. In the production of energy from fats, this is one of the enzymes that catalyzes the last step of the mitochondrial beta-oxidation pathway, an aerobic process breaking down fatty acids into acetyl-CoA. Using free coenzyme A/CoA, catalyzes the thiolytic cleavage of medium- to long-chain unbranched 3-oxoacyl-CoAs into acetyl-CoA and a fatty acyl-CoA shortened by two carbon atoms. Also catalyzes the condensation of two acetyl-CoA molecules into acetoacetyl-CoA and could be involved in the production of ketone bodies. Also displays hydrolase activity on various fatty acyl-CoAs. Thereby, could be responsible for the production of acetate in a side reaction to beta-oxidation. Abolishes BNIP3-mediated apoptosis and mitochondrial damage. The polypeptide is 3-ketoacyl-CoA thiolase, mitochondrial (ACAA2) (Pongo abelii (Sumatran orangutan)).